The primary structure comprises 447 residues: MAGVGGGNDFQWCFSQVKGAIDEDVAEADIISTVEFNCSGELLATGDKGGRVVIFQREQENKSRPHSRGEYNVYSTFQSHEPEFDYLKSLEIEEKINKIRWLPQQNAANFLLSTNDKTIKLWKISERDKRVEGYNLKDDDGRLRDPFRITSLRVPILKPMDLMVEASPRRIFANAHTYHINSISVNSDHQTYLSADDLRVNLWHLEITDRSFNIVDIKPANMEELTEVITAAEFHPHHCHMFVYSSSKGTIRLCDMRDAALCDRHSKFFEEPEDPSSRSFFSEIISSISDVKFSHSGRYMMTRDYLSVKVWDLNMESRPVETYQVHEYLRSKLCSLYENDCIFDKFECCWNGSDSSIMTGSYNNFFRMFDRNTRRDITLEASRESSKPRATLKPRKVCTGGKRKKDEINVDSLDFNKKILHTAWHPTDNIIAVAATNNLYIFQDKVN.

7 WD repeats span residues 26–65 (AEAD…KSRP), 91–132 (EIEE…KRVE), 175–213 (AHTY…RSFN), 224–264 (ELTE…LCDR), 283–321 (EIIS…RPVE), 338–379 (ENDC…DITL), and 414–447 (DFNK…DKVN).

Belongs to the phosphatase 2A regulatory subunit B family. As to quaternary structure, PP2A consists of a common heterodimeric core enzyme, composed of a 36 kDa catalytic subunit (subunit C) and a 65 kDa constant regulatory subunit (PR65 or subunit A), that associates with a variety of regulatory subunits. Proteins that associate with the core dimer include three families of regulatory subunits B (the R2/B/PR55/B55, R3/B''/PR72/PR130/PR59 and R5/B'/B56 families), the 48 kDa variable regulatory subunit, viral proteins, and cell signaling molecules. Interacts with ensa (when phosphorylated at 'Ser-67') and arpp19 (when phosphorylated at 'Ser-67'), leading to inhibit PP2A activity.

The protein localises to the cytoplasm. Its function is as follows. Substrate-recognition subunit of protein phosphatase 2A (PP2A) that plays a key role in cell cycle by controlling mitosis entry and exit. The activity of PP2A complexes containing ppp2r2d (PR55-delta) fluctuate during the cell cycle: the activity is high in interphase and low in mitosis. During mitosis, activity of PP2A is inhibited via interaction with phosphorylated ensa and arpp19 inhibitors. PP2A complexes containing ppp2r2d (PR55-delta) also regulate the activity of TGF-beta/Activin/Nodal signaling by restricting receptor activity. Within the PP2A complexes, the B regulatory subunits modulate substrate selectivity and catalytic activity, and may also direct the localization of the catalytic enzyme to a particular subcellular compartment. This Xenopus laevis (African clawed frog) protein is Serine/threonine-protein phosphatase 2A 55 kDa regulatory subunit B delta isoform (ppp2r2d).